Here is a 485-residue protein sequence, read N- to C-terminus: Sulfate adenylyltransferase subunit 1 (485 aa).

Positions 30-243 constitute a tr-type G domain; it reads KGLLRFLTCG…ELLETIDTQR (214 aa). The segment at 39 to 46 is G1; the sequence is GSVDDGKS. Residue 39 to 46 coordinates GTP; that stretch reads GSVDDGKS. The tract at residues 97-101 is G2; that stretch reads GITID. The tract at residues 118–121 is G3; the sequence is DTPG. GTP is bound by residues 118–122 and 173–176; these read DTPGH and NKMD. Residues 173 to 176 are G4; it reads NKMD. A G5 region spans residues 210-212; the sequence is SAL.

This sequence belongs to the TRAFAC class translation factor GTPase superfamily. Classic translation factor GTPase family. CysN/NodQ subfamily. As to quaternary structure, heterodimer composed of CysD, the smaller subunit, and CysN.

The enzyme catalyses sulfate + ATP + H(+) = adenosine 5'-phosphosulfate + diphosphate. It functions in the pathway sulfur metabolism; hydrogen sulfide biosynthesis; sulfite from sulfate: step 1/3. Functionally, with CysD forms the ATP sulfurylase (ATPS) that catalyzes the adenylation of sulfate producing adenosine 5'-phosphosulfate (APS) and diphosphate, the first enzymatic step in sulfur assimilation pathway. APS synthesis involves the formation of a high-energy phosphoric-sulfuric acid anhydride bond driven by GTP hydrolysis by CysN coupled to ATP hydrolysis by CysD. The chain is Sulfate adenylyltransferase subunit 1 from Shewanella oneidensis (strain ATCC 700550 / JCM 31522 / CIP 106686 / LMG 19005 / NCIMB 14063 / MR-1).